A 327-amino-acid polypeptide reads, in one-letter code: MAVPAKKRKMNFSEREVEIIVEELELKKHLLVNHFNAGVPLAAKSAAWHGILRRVNAVATCRRELPEVKKKWSDLKTEVRRKVAQVRAAVEGGEAPGPTEEDGAGGPGTGGGSGGGGPAVAPVLLTPMQQRICNLLGEATIISLPSTTEIHPVALGPSATAAAATVTLTQIPTETTYHTLEEGVVEYCTAEAPPPLPPETPVDMMAQHADTSVKPQALKSRIALNSAKLIQEQRVTNLHVKEIAQHLEQQNDLLQMIRRSQEVQACAQERQAQAMEGTQAALSVLIQVLRPMIKDFRRYLQSNTANPAPASDPGQVAQNGQPDSIIQ.

A required for nuclear localization and apoptosis-inducing activity region spans residues 1-70 (MAVPAKKRKM…CRRELPEVKK (70 aa)). Over residues 87–98 (RAAVEGGEAPGP) the composition is skewed to low complexity. Disordered regions lie at residues 87–118 (RAAVEGGEAPGPTEEDGAGGPGTGGGSGGGGP) and 303–327 (NTANPAPASDPGQVAQNGQPDSIIQ). Residues 104-118 (AGGPGTGGGSGGGGP) show a composition bias toward gly residues. The segment covering 316–327 (VAQNGQPDSIIQ) has biased composition (polar residues).

It belongs to the NAIF1 family. Interacts with HARBI1. Widely expressed.

It localises to the nucleus. Its function is as follows. Induces apoptosis. This chain is Nuclear apoptosis-inducing factor 1 (NAIF1), found in Homo sapiens (Human).